A 1067-amino-acid chain; its full sequence is Cadmium/zinc-transporting ATPase HMA2 (1067 aa).

One can recognise an HMA domain in the interval 9 to 75; sequence QKSYFDVLGI…ALNQARLEAS (67 aa). The next 8 membrane-spanning stretches (helical) occupy residues 94 to 114, 117 to 137, 140 to 160, 162 to 182, 313 to 333, 342 to 362, 649 to 669, and 673 to 693; these read YVLL…WHPL, FALV…IAAI, LTLD…ALKD, SEAG…TRAS, YTPA…IAKA, LALV…TPIA, IIVN…LAFA, and LIWA…MYSM. 3 disordered regions span residues 711-739, 760-790, and 960-996; these read HHGS…HHCS, HDHH…SHGH, and NDTH…GHHP. Positions 724–735 are enriched in basic residues; that stretch reads HGSHAKKNHGVS. Composition is skewed to basic and acidic residues over residues 760-774 and 975-996; these read HDHH…EPAH and SSDH…GHHP.

Belongs to the cation transport ATPase (P-type) (TC 3.A.3) family. Type IB subfamily. In terms of tissue distribution, in roots, localizes at the pericycle cells. In nodes, localizes in the phloem parenchyma and companion cells of both enlarged and diffuse vascular bundles.

It is found in the cell membrane. The enzyme catalyses Zn(2+)(in) + ATP + H2O = Zn(2+)(out) + ADP + phosphate + H(+). It catalyses the reaction Cd(2+)(in) + ATP + H2O = Cd(2+)(out) + ADP + phosphate + H(+). Zinc/cadmium transporter that plays an essential role in promoting translocation of zinc and cadmium from roots to shoots. May control cadmium loading into xylem. In roots, transports zinc and cadmium from the apoplast to the symplast to facilitate translocation via the phloem. In nodes, functions to load zinc and cadmium to the phloem for the preferential distribution to the upper nodes and panicles. The sequence is that of Cadmium/zinc-transporting ATPase HMA2 from Oryza sativa subsp. japonica (Rice).